Reading from the N-terminus, the 142-residue chain is Large ribosomal subunit protein mL43 (142 aa).

This sequence belongs to the mitochondrion-specific ribosomal protein mL43 family. Component of the mitochondrial large ribosomal subunit. Mature mitochondrial ribosomes consist of a small (37S) and a large (54S) subunit. The 37S subunit contains at least 33 different proteins and 1 molecule of RNA (15S). The 54S subunit contains at least 45 different proteins and 1 molecule of RNA (21S).

It localises to the mitochondrion. The sequence is that of Large ribosomal subunit protein mL43 (MRPL51) from Eremothecium gossypii (strain ATCC 10895 / CBS 109.51 / FGSC 9923 / NRRL Y-1056) (Yeast).